The sequence spans 704 residues: Probable ferric reduction oxidase 1 (704 aa).

Residues 1-16 (MGVGEMNKEVIDKVIK) are Cytoplasmic-facing. Residues 17 to 36 (FLMMVILMGTIVIWIMMPTS) form a helical membrane-spanning segment. The Lumenal segment spans residues 37 to 62 (TYKEIWLTSMRAKLGKSIYYGRPGVN). Residues 63–81 (LLVYMFPMILLAFLGCIYL) form a helical membrane-spanning segment. Residues 82–115 (HLKKSTTVNQFNSGVEKKRAKFGALRRPMLVNGP) lie on the Cytoplasmic side of the membrane. A helical membrane pass occupies residues 116–139 (LGIVTVTEVMFLTMFMALLLWSLA). Topologically, residues 140 to 207 (NYMYRTFVNV…VGLTSESSIK (68 aa)) are lumenal. In terms of domain architecture, Ferric oxidoreductase spans 174–294 (GIVGNICLAF…YLYIVFMLFF (121 aa)). Residues 208-231 (YHIWLGHLVMIIFTSHGLCYFIYW) traverse the membrane as a helical segment. Histidine 209 and histidine 223 together coordinate heme. The Cytoplasmic segment spans residues 232-282 (ISKNQLVSKMLEWDRTAVSNLAGEIALVAGLMMWVTTYPKIRRRLFEVFFY). A helical transmembrane segment spans residues 283–307 (SHYLYIVFMLFFVFHVGISHALIPL). Heme contacts are provided by histidine 284 and histidine 297. At 308 to 329 (PGFYIFLVDRFLRFLQSRNNVK) the chain is on the lumenal side. The region spanning 323–430 (QSRNNVKLVS…EGPYGPSSTD (108 aa)) is the FAD-binding FR-type domain. The chain crosses the membrane as a helical span at residues 330 to 350 (LVSARVLPCDTVELNFSKNPM). The Cytoplasmic segment spans residues 351–550 (LMYSPTSTMF…PISPILGPNS (200 aa)). FAD is bound at residue 372–375 (HPFT). 422–425 (GPYG) is an NAD(+) binding site. The chain crosses the membrane as a helical span at residues 551–573 (WLCLAAILSSSFMIFIVIIAIIT). The Lumenal segment spans residues 574–592 (RYHIHPIDQNSEKYTWAYK). A helical membrane pass occupies residues 593 to 614 (SLIYLVSISITVVTTSTAAMLW). Topologically, residues 615 to 704 (NKKKYYAKND…LHFESISFSW (90 aa)) are cytoplasmic.

Belongs to the ferric reductase (FRE) family. FAD is required as a cofactor. As to expression, expressed in siliques. Detected in roots.

It is found in the membrane. The catalysed reaction is 2 a Fe(II)-siderophore + NAD(+) + H(+) = 2 a Fe(III)-siderophore + NADH. Its function is as follows. Ferric chelate reductase involved in iron reduction in roots. May participate in the transport of electrons to a Fe(3+) ion via FAD and heme intermediates. This Arabidopsis thaliana (Mouse-ear cress) protein is Probable ferric reduction oxidase 1 (FRO1).